Consider the following 87-residue polypeptide: uncharacterized protein (87 aa).

This is an uncharacterized protein from Enterobacteria phage T4 (Bacteriophage T4).